Consider the following 163-residue polypeptide: Nucleotide-binding protein NFA_51200 (163 aa).

It belongs to the YajQ family.

Nucleotide-binding protein. In Nocardia farcinica (strain IFM 10152), this protein is Nucleotide-binding protein NFA_51200.